Reading from the N-terminus, the 286-residue chain is Flagellin FlaB1 (286 aa).

The segment at 231–286 is required for interaction with FliW; the sequence is LDIAAENLQAAESRIRDANIAKQMVEYTKNQVLTQSGTAMLAQANTSAQSILSILR.

The protein belongs to the bacterial flagellin family. The flagellum consists of an outer layer composed of repeating units of FlaA around a core that contains several antigenically related polypeptides. Interacts via its C-terminus with FliW; a synthetic peptide of residues 229-247 partially blocks binding to FliW.

It is found in the periplasmic flagellum. The protein resides in the periplasm. Its function is as follows. Component of the core of the flagella. The sequence is that of Flagellin FlaB1 (flaB1) from Treponema pallidum (strain Nichols).